A 430-amino-acid chain; its full sequence is Adenylosuccinate synthetase (430 aa).

GTP-binding positions include 12–18 (GDEGKGK) and 40–42 (GHT). Aspartate 13 functions as the Proton acceptor in the catalytic mechanism. Positions 13 and 40 each coordinate Mg(2+). Residues 13-16 (DEGK), 38-41 (NAGH), threonine 130, arginine 144, glutamine 225, threonine 240, and arginine 304 each bind IMP. Residue histidine 41 is the Proton donor of the active site. Position 300-306 (300-306 (ATTGRPR)) interacts with substrate. Residues arginine 306, 332-334 (KLD), and 414-416 (SIG) each bind GTP.

It belongs to the adenylosuccinate synthetase family. In terms of assembly, homodimer. Requires Mg(2+) as cofactor.

It localises to the cytoplasm. The catalysed reaction is IMP + L-aspartate + GTP = N(6)-(1,2-dicarboxyethyl)-AMP + GDP + phosphate + 2 H(+). It functions in the pathway purine metabolism; AMP biosynthesis via de novo pathway; AMP from IMP: step 1/2. Functionally, plays an important role in the de novo pathway of purine nucleotide biosynthesis. Catalyzes the first committed step in the biosynthesis of AMP from IMP. The chain is Adenylosuccinate synthetase from Geobacter metallireducens (strain ATCC 53774 / DSM 7210 / GS-15).